Reading from the N-terminus, the 320-residue chain is MVNSPIKPTKLAIVGAGAVGSTLAFAAAERGIAREIALQDIAKERVEAEVLDMQHGSSFFPTVSIEGSDDPEVCRDADMVVITAGARQKPGQSRLDLAGATINIMKSIIPNMLKVAPNAIYMLITNPVDIVTHVAMKLSGLPASRMFGSGTNLDSARLRFLIAQQTGVNVKNVHAYIAGEHGDSEVPLWASATIGGVPMCDWQALPGHEPLDAEARERIHQEVKNAAYKIINGKGATNYAISMSGVDIIEAILKDSNRILPVSSLLSDFHGISDVCMSVPTLLNRNGVNSRINTPVSDRELAALKRSAETLRETAAQFGF.

NAD(+)-binding positions include Val-19, Asp-40, Arg-45, and 85-86 (GA). Substrate contacts are provided by Gln-88 and Arg-94. Residues Ser-107, 124-126 (ITN), and Ser-149 each bind NAD(+). A substrate-binding site is contributed by 126-129 (NPVD). 154–157 (DSAR) contacts substrate. Residues Arg-159 and His-174 each coordinate beta-D-fructose 1,6-bisphosphate. The active-site Proton acceptor is His-181. Tyr-228 bears the Phosphotyrosine mark. Residue Thr-237 coordinates substrate.

Belongs to the LDH/MDH superfamily. LDH family. As to quaternary structure, homotetramer.

The protein resides in the cytoplasm. The enzyme catalyses (S)-lactate + NAD(+) = pyruvate + NADH + H(+). The protein operates within fermentation; pyruvate fermentation to lactate; (S)-lactate from pyruvate: step 1/1. Its activity is regulated as follows. Allosterically activated by fructose 1,6-bisphosphate (FBP). In terms of biological role, catalyzes the conversion of lactate to pyruvate. The protein is L-lactate dehydrogenase of Bifidobacterium animalis subsp. lactis (strain AD011).